We begin with the raw amino-acid sequence, 885 residues long: DNA mismatch repair protein MutS (885 aa).

626–633 is an ATP binding site; sequence GPNMGGKS.

It belongs to the DNA mismatch repair MutS family.

This protein is involved in the repair of mismatches in DNA. It is possible that it carries out the mismatch recognition step. This protein has a weak ATPase activity. This chain is DNA mismatch repair protein MutS, found in Burkholderia orbicola (strain MC0-3).